The primary structure comprises 550 residues: Hydroxylamine reductase (550 aa).

Residues Cys3, Cys6, Cys18, and Cys25 each contribute to the [2Fe-2S] cluster site. The hybrid [4Fe-2O-2S] cluster site is built by His249, Glu273, Cys317, Cys405, Cys433, Cys458, Glu492, and Lys494. Position 405 is a cysteine persulfide (Cys405).

Belongs to the HCP family. Requires [2Fe-2S] cluster as cofactor. The cofactor is hybrid [4Fe-2O-2S] cluster.

Its subcellular location is the cytoplasm. It catalyses the reaction A + NH4(+) + H2O = hydroxylamine + AH2 + H(+). Catalyzes the reduction of hydroxylamine to form NH(3) and H(2)O. This Salmonella dublin (strain CT_02021853) protein is Hydroxylamine reductase.